The following is a 210-amino-acid chain: Glutathione S-transferase P 2 (210 aa).

The region spanning 2–81 (PPYTIVYFPS…HLGRSLGLYG (80 aa)) is the GST N-terminal domain. Glutathione is bound by residues Tyr8, Arg14, Trp39, Lys45, 52–53 (QL), and 65–66 (QS). The GST C-terminal domain maps to 83-204 (NQREAAQVDM…SSPEHVNRPI (122 aa)).

The protein belongs to the GST superfamily. Pi family. In terms of assembly, homodimer. As to expression, selectively expressed in gall bladder, colon, heart, and skeletal muscle.

It catalyses the reaction RX + glutathione = an S-substituted glutathione + a halide anion + H(+). Conjugation of reduced glutathione to a wide number of exogenous and endogenous hydrophobic electrophiles. Cannot metabolize 1-chloro-2,4-dinitrobenzene. The chain is Glutathione S-transferase P 2 (Gstp2) from Mus musculus (Mouse).